We begin with the raw amino-acid sequence, 259 residues long: MLPLNATIVQINEESPLVRTFFFDFQFETMEPGQFVMVWVRGVDEVPMGLSSKNSITVQKVGEATSKLFELKEGDSFGLRGPFGKGFSLPSEGEKTLIIAGGVGAAPLAPYAEAARSAGSEVHTVLGARSAGDLLFEKRFAEAGKVYISTDDGSKGTKGFVTDVLTDLDLSVYDRIAVCGPEIMISSVFRLLKDRQVLEKSEFSLQRYFKCGIGVCGACCIDKSGLRVCRDGPVFSGVQLLDSELGKYARDASGRRVKI.

The FAD-binding FR-type domain occupies 1–89 (MLPLNATIVQ…RGPFGKGFSL (89 aa)). [2Fe-2S] cluster contacts are provided by C211, C216, C219, and C229.

This sequence belongs to the PyrK family. As to quaternary structure, heterotetramer of 2 PyrK and 2 PyrD type B subunits. The cofactor is [2Fe-2S] cluster. FAD is required as a cofactor.

Its pathway is pyrimidine metabolism; UMP biosynthesis via de novo pathway; orotate from (S)-dihydroorotate (NAD(+) route): step 1/1. Responsible for channeling the electrons from the oxidation of dihydroorotate from the FMN redox center in the PyrD type B subunit to the ultimate electron acceptor NAD(+). The protein is Probable dihydroorotate dehydrogenase B (NAD(+)), electron transfer subunit of Methanosarcina barkeri (strain Fusaro / DSM 804).